A 339-amino-acid polypeptide reads, in one-letter code: Glycerol-3-phosphate dehydrogenase [NAD(P)+] (339 aa).

Positions 14, 15, 35, and 109 each coordinate NADPH. The sn-glycerol 3-phosphate site is built by Lys109, Gly138, and Thr140. Ala142 provides a ligand contact to NADPH. Sn-glycerol 3-phosphate contacts are provided by Lys194, Asp247, Ser257, Arg258, and Asn259. Lys194 acts as the Proton acceptor in catalysis. Arg258 contacts NADPH. Residues Val282 and Glu284 each coordinate NADPH.

Belongs to the NAD-dependent glycerol-3-phosphate dehydrogenase family.

It is found in the cytoplasm. It catalyses the reaction sn-glycerol 3-phosphate + NAD(+) = dihydroxyacetone phosphate + NADH + H(+). The catalysed reaction is sn-glycerol 3-phosphate + NADP(+) = dihydroxyacetone phosphate + NADPH + H(+). The protein operates within membrane lipid metabolism; glycerophospholipid metabolism. In terms of biological role, catalyzes the reduction of the glycolytic intermediate dihydroxyacetone phosphate (DHAP) to sn-glycerol 3-phosphate (G3P), the key precursor for phospholipid synthesis. This is Glycerol-3-phosphate dehydrogenase [NAD(P)+] from Shewanella pealeana (strain ATCC 700345 / ANG-SQ1).